The primary structure comprises 102 residues: Trp operon repressor homolog (102 aa).

The DNA-binding element occupies 59–82 (QRQISQMLGVGIATITRGSNELKL).

Belongs to the TrpR family. In terms of assembly, homodimer.

It localises to the cytoplasm. Its function is as follows. This protein is an aporepressor. When complexed with L-tryptophan it binds the operator region of the trp operon and prevents the initiation of transcription. This chain is Trp operon repressor homolog, found in Vibrio vulnificus (strain CMCP6).